We begin with the raw amino-acid sequence, 178 residues long: Translation initiation factor IF-3 (178 aa).

It belongs to the IF-3 family. Monomer.

The protein resides in the cytoplasm. Functionally, IF-3 binds to the 30S ribosomal subunit and shifts the equilibrium between 70S ribosomes and their 50S and 30S subunits in favor of the free subunits, thus enhancing the availability of 30S subunits on which protein synthesis initiation begins. This is Translation initiation factor IF-3 from Ureaplasma parvum serovar 3 (strain ATCC 700970).